A 336-amino-acid chain; its full sequence is Alpha-glucoside transport system permease protein AglF (336 aa).

8 helical membrane-spanning segments follow: residues 4–24, 55–75, 113–133, 146–166, 176–196, 202–222, 258–278, and 304–324; these read LIAA…YFWS, PWLF…YPVV, FLWL…IAAL, LIFM…KFIY, IGLL…WITL, FFLM…ILSA, IAVV…IVLA, and FGRG…IMIW. The 217-residue stretch at 109 to 325 folds into the ABC transmembrane type-1 domain; sequence IFNNFLWLLV…ILVVPIMIWN (217 aa).

Belongs to the binding-protein-dependent transport system permease family. MalFG subfamily.

It is found in the cell inner membrane. In terms of biological role, part of the binding-protein-dependent transport system for alpha-glucosides such as sucrose, maltose and trehalose. Probably responsible for the translocation of the substrate across the membrane. The polypeptide is Alpha-glucoside transport system permease protein AglF (aglF) (Rhizobium meliloti (strain 1021) (Ensifer meliloti)).